Here is a 219-residue protein sequence, read N- to C-terminus: Probable GTP-binding protein EngB (219 aa).

The 175-residue stretch at 31-205 (VGVEIAFAGR…LSILNEWCHP (175 aa)) folds into the EngB-type G domain. Residues 39–46 (GRSNAGKS), 66–70 (GRTQL), 84–87 (DLPG), 151–154 (TKSD), and 184–186 (FSA) contribute to the GTP site. Mg(2+)-binding residues include serine 46 and threonine 68.

The protein belongs to the TRAFAC class TrmE-Era-EngA-EngB-Septin-like GTPase superfamily. EngB GTPase family. Requires Mg(2+) as cofactor.

Its function is as follows. Necessary for normal cell division and for the maintenance of normal septation. This Shewanella sp. (strain W3-18-1) protein is Probable GTP-binding protein EngB.